Consider the following 192-residue polypeptide: Xanthine phosphoribosyltransferase (192 aa).

Residues Leu20 and Asn27 each contribute to the xanthine site. 128 to 132 is a 5-phospho-alpha-D-ribose 1-diphosphate binding site; that stretch reads ANGDA. Residue Lys156 participates in xanthine binding.

It belongs to the purine/pyrimidine phosphoribosyltransferase family. Xpt subfamily. As to quaternary structure, homodimer.

Its subcellular location is the cytoplasm. The enzyme catalyses XMP + diphosphate = xanthine + 5-phospho-alpha-D-ribose 1-diphosphate. It functions in the pathway purine metabolism; XMP biosynthesis via salvage pathway; XMP from xanthine: step 1/1. Its function is as follows. Converts the preformed base xanthine, a product of nucleic acid breakdown, to xanthosine 5'-monophosphate (XMP), so it can be reused for RNA or DNA synthesis. The chain is Xanthine phosphoribosyltransferase from Staphylococcus epidermidis (strain ATCC 35984 / DSM 28319 / BCRC 17069 / CCUG 31568 / BM 3577 / RP62A).